An 836-amino-acid polypeptide reads, in one-letter code: Protein translocase subunit SecA (836 aa).

Residues Gln-85, 103 to 107 (GEGKT), and Asp-492 contribute to the ATP site. Residues Cys-820, Cys-822, Cys-831, and Cys-832 each coordinate Zn(2+).

This sequence belongs to the SecA family. Monomer and homodimer. Part of the essential Sec protein translocation apparatus which comprises SecA, SecYEG and auxiliary proteins SecDF. Other proteins may also be involved. Zn(2+) serves as cofactor.

The protein localises to the cell membrane. The protein resides in the cytoplasm. It carries out the reaction ATP + H2O + cellular proteinSide 1 = ADP + phosphate + cellular proteinSide 2.. In terms of biological role, part of the Sec protein translocase complex. Interacts with the SecYEG preprotein conducting channel. Has a central role in coupling the hydrolysis of ATP to the transfer of proteins into and across the cell membrane, serving as an ATP-driven molecular motor driving the stepwise translocation of polypeptide chains across the membrane. This is Protein translocase subunit SecA from Clostridium botulinum (strain Alaska E43 / Type E3).